Here is a 684-residue protein sequence, read N- to C-terminus: Pheromone-processing carboxypeptidase KEX1 (684 aa).

The N-terminal stretch at 1–18 (MVIKYLLLILVQSFVAFA) is a signal peptide. The Lumenal portion of the chain corresponds to 19-556 (LPFTSRSDPK…NQQTSNRITR (538 aa)). Asparagine 62 is a glycosylation site (N-linked (GlcNAc...) asparagine). Active-site residues include serine 181 and aspartate 388. 2 N-linked (GlcNAc...) asparagine glycosylation sites follow: asparagine 424 and asparagine 435. The active site involves histidine 446. The N-linked (GlcNAc...) asparagine glycan is linked to asparagine 474. Positions 494–549 (KQKEESESKTSPTSVTQSKTSSISAVSGKSLATSTTLDQEHSATPSAEAERAKNQQ) are disordered. A compositionally biased stretch (polar residues) spans 510–538 (QSKTSSISAVSGKSLATSTTLDQEHSATP). Residues 557–577 (LIQLLVIVVLIWGVYILYSSY) form a helical membrane-spanning segment. The Cytoplasmic segment spans residues 578 to 684 (RSRPSSIIKT…NQTNKQSVSK (107 aa)). The tract at residues 647 to 684 (MNEGITEHTDNRVDDFIIESDEEDAHDENQTNKQSVSK) is disordered. The segment covering 651-661 (ITEHTDNRVDD) has biased composition (basic and acidic residues). Positions 662–672 (FIIESDEEDAH) are enriched in acidic residues.

Belongs to the peptidase S10 family.

The protein resides in the golgi apparatus. Its subcellular location is the trans-Golgi network membrane. The catalysed reaction is Preferential release of a C-terminal arginine or lysine residue.. In terms of biological role, protease with a carboxypeptidase B-like function involved in the C-terminal processing of the lysine and arginine residues from protein precursors. Promotes cell fusion and is involved in the programmed cell death. The polypeptide is Pheromone-processing carboxypeptidase KEX1 (KEX1) (Debaryomyces hansenii (strain ATCC 36239 / CBS 767 / BCRC 21394 / JCM 1990 / NBRC 0083 / IGC 2968) (Yeast)).